A 50-amino-acid chain; its full sequence is Protein PndA (50 aa).

A helical transmembrane segment spans residues 5–25 (TFLMMLIVICVTILCFVWMVR).

It belongs to the Hok/Gef family.

Its subcellular location is the cell inner membrane. In terms of biological role, toxic component of a type I toxin-antitoxin (TA) system. When expressed is involved in cellular Mg(2+) release and degradation of stable RNA. This Escherichia coli protein is Protein PndA (pndA).